Consider the following 331-residue polypeptide: uncharacterized protein (331 aa).

Disordered stretches follow at residues 131 to 163 (ISHA…KKRS) and 190 to 209 (DEQK…VQSS). Basic residues predominate over residues 140-162 (RPKPTKPRASRKRAAIAQSKKKR). Positions 195-209 (RQSTSQPDKEIVQSS) are enriched in polar residues.

This is an uncharacterized protein from Caenorhabditis elegans.